The following is a 158-amino-acid chain: Ankyrin repeat domain-containing protein 37 (158 aa).

3 ANK repeats span residues 1–25 (MLLL…SVNA), 30–59 (CEQS…DLNQ), and 63–92 (FGEA…QIDL). A Nuclear localization signal motif is present at residues 129–149 (EQPNKDHCVQVLRLKRSFGSE).

Post-translationally, ubiquitinated by the CRL2(FEM1B) complex, leading to its degradation.

The protein localises to the nucleus. Its subcellular location is the cytoplasm. The sequence is that of Ankyrin repeat domain-containing protein 37 (ANKRD37) from Bos taurus (Bovine).